Reading from the N-terminus, the 345-residue chain is Methylthioribose-1-phosphate isomerase (345 aa).

Substrate is bound by residues 44–46 (RGA), R86, and Q194. Catalysis depends on D235, which acts as the Proton donor. 245 to 246 (NK) contacts substrate.

This sequence belongs to the eIF-2B alpha/beta/delta subunits family. MtnA subfamily.

The catalysed reaction is 5-(methylsulfanyl)-alpha-D-ribose 1-phosphate = 5-(methylsulfanyl)-D-ribulose 1-phosphate. It participates in amino-acid biosynthesis; L-methionine biosynthesis via salvage pathway; L-methionine from S-methyl-5-thio-alpha-D-ribose 1-phosphate: step 1/6. Catalyzes the interconversion of methylthioribose-1-phosphate (MTR-1-P) into methylthioribulose-1-phosphate (MTRu-1-P). This Desulfitobacterium hafniense (strain Y51) protein is Methylthioribose-1-phosphate isomerase.